We begin with the raw amino-acid sequence, 140 residues long: Pro-vaccinia growth factor (140 aa).

Residues 1 to 18 (MSMKYLMLLFAAMIIRSF) form the signal peptide. At 19 to 100 (ADSGNAIETT…SENPNTTTSY (82 aa)) the chain is on the extracellular side. Asn34 is a glycosylation site (N-linked (GlcNAc...) asparagine; by host). An EGF-like domain is found at 41-81 (AIRLCGPEGDGYCLHGDCIHARDIDGMYCRCSHGYTGIRCQ). Disulfide bonds link Cys45–Cys58, Cys53–Cys69, and Cys71–Cys80. Asn95 carries N-linked (GlcNAc...) asparagine; by host glycosylation. The chain crosses the membrane as a helical span at residues 101–121 (IPSPGIVLVLVGIIIITCCSL). The Cytoplasmic segment spans residues 122 to 140 (SVYRFTRRTKLPIQDMVVP).

It belongs to the orthopoxvirus OPG019 family. In terms of assembly, vaccinia growth factor interacts with host EGFR and promotes EGFR dimerization.

The protein resides in the host membrane. It localises to the secreted. Stimulates cellular proliferation (hyperplasia)and mobility around infected cells to promote rapid and efficient spread of infection. This effect is beneficial for virus replication in vivo, because poxviruses replicate possibly better in proliferating cells than in quiescent cells. Acts by binding host EGFR, inducing its dimerization, autophosphorylation and leading to activation of several cellular pathways regulating cell proliferation or cell survival. The activation by host EGFR of mitogen activated protein kinases (MAPK) and extracellular-signal regulated kinases (ERK) are essential for the positive effect of vaccinia growth factor on poxvirus virulence in vivo. The chain is Pro-vaccinia growth factor (OPG019) from Vaccinia virus (strain L-IVP) (VACV).